A 34-amino-acid chain; its full sequence is Photosystem II reaction center protein M (34 aa).

Residues 5–25 (ILAFIATTLFVLVPTAFLLII) form a helical membrane-spanning segment.

It belongs to the PsbM family. As to quaternary structure, PSII is composed of 1 copy each of membrane proteins PsbA, PsbB, PsbC, PsbD, PsbE, PsbF, PsbH, PsbI, PsbJ, PsbK, PsbL, PsbM, PsbT, PsbX, PsbY, PsbZ, Psb30/Ycf12, at least 3 peripheral proteins of the oxygen-evolving complex and a large number of cofactors. It forms dimeric complexes.

The protein localises to the plastid. The protein resides in the chloroplast thylakoid membrane. Its function is as follows. One of the components of the core complex of photosystem II (PSII). PSII is a light-driven water:plastoquinone oxidoreductase that uses light energy to abstract electrons from H(2)O, generating O(2) and a proton gradient subsequently used for ATP formation. It consists of a core antenna complex that captures photons, and an electron transfer chain that converts photonic excitation into a charge separation. This subunit is found at the monomer-monomer interface. In Citrus sinensis (Sweet orange), this protein is Photosystem II reaction center protein M.